The chain runs to 92 residues: MKALGNISHVSNKGRIIARSDRTQQLGAPVFTSDGKRIGKVHDIFGPTRNPYISIKPSRAINPEKFENRVGETLYVGIKNVKKWGRRKRRRK.

It to M.jannaschii MJ0782.1.

This is an uncharacterized protein from Methanothermobacter thermautotrophicus (strain ATCC 29096 / DSM 1053 / JCM 10044 / NBRC 100330 / Delta H) (Methanobacterium thermoautotrophicum).